Consider the following 449-residue polypeptide: Bifunctional protein GlmU (449 aa).

The interval 1–226 (MNNIHAIILA…KFEVLGVNDK (226 aa)) is pyrophosphorylase. Residues 9–12 (LAAG), Lys-23, Gln-73, 78–79 (GT), 100–102 (YGD), Gly-137, Glu-151, Asn-166, and Asn-224 contribute to the UDP-N-acetyl-alpha-D-glucosamine site. Asp-102 is a Mg(2+) binding site. Asn-224 is a Mg(2+) binding site. A linker region spans residues 227–247 (VQLAELERLFQKDQAIQFMKQ). The tract at residues 248–449 (GLGLKDPTRF…QKNLKYRSKK (202 aa)) is N-acetyltransferase. The UDP-N-acetyl-alpha-D-glucosamine site is built by Arg-330 and Lys-348. The Proton acceptor role is filled by His-360. Residues Tyr-363 and Asn-374 each contribute to the UDP-N-acetyl-alpha-D-glucosamine site. Acetyl-CoA contacts are provided by residues Ala-377, 383–384 (NY), Ser-402, Ala-420, and Arg-437.

This sequence in the N-terminal section; belongs to the N-acetylglucosamine-1-phosphate uridyltransferase family. In the C-terminal section; belongs to the transferase hexapeptide repeat family. Homotrimer. Mg(2+) serves as cofactor.

It localises to the cytoplasm. The enzyme catalyses alpha-D-glucosamine 1-phosphate + acetyl-CoA = N-acetyl-alpha-D-glucosamine 1-phosphate + CoA + H(+). It carries out the reaction N-acetyl-alpha-D-glucosamine 1-phosphate + UTP + H(+) = UDP-N-acetyl-alpha-D-glucosamine + diphosphate. The protein operates within nucleotide-sugar biosynthesis; UDP-N-acetyl-alpha-D-glucosamine biosynthesis; N-acetyl-alpha-D-glucosamine 1-phosphate from alpha-D-glucosamine 6-phosphate (route II): step 2/2. It functions in the pathway nucleotide-sugar biosynthesis; UDP-N-acetyl-alpha-D-glucosamine biosynthesis; UDP-N-acetyl-alpha-D-glucosamine from N-acetyl-alpha-D-glucosamine 1-phosphate: step 1/1. Its pathway is bacterial outer membrane biogenesis; LPS lipid A biosynthesis. Its function is as follows. Catalyzes the last two sequential reactions in the de novo biosynthetic pathway for UDP-N-acetylglucosamine (UDP-GlcNAc). The C-terminal domain catalyzes the transfer of acetyl group from acetyl coenzyme A to glucosamine-1-phosphate (GlcN-1-P) to produce N-acetylglucosamine-1-phosphate (GlcNAc-1-P), which is converted into UDP-GlcNAc by the transfer of uridine 5-monophosphate (from uridine 5-triphosphate), a reaction catalyzed by the N-terminal domain. This is Bifunctional protein GlmU from Vesicomyosocius okutanii subsp. Calyptogena okutanii (strain HA).